The primary structure comprises 387 residues: Flap endonuclease 1 (387 aa).

Positions 1-104 are N-domain; sequence MGIKGLSQLI…GELEKRKERQ (104 aa). D34 contacts Mg(2+). Residue R70 participates in DNA binding. Positions 86, 158, 160, 179, and 181 each coordinate Mg(2+). An I-domain region spans residues 122-253; it reads KMVMWNKRTT…KKALAMIKKY (132 aa). Residue E158 coordinates DNA. 2 residues coordinate DNA: G231 and D233. D233 is a binding site for Mg(2+). Residues 332–387 form a disordered region; sequence SSRGKPTQTRLDGFFTPVASSSTTKKKAPAKKDDKKSATDKKRKAADASTSSKKKK. The tract at residues 338-346 is interaction with PCNA; the sequence is TQTRLDGFF. A compositionally biased stretch (basic and acidic residues) spans 361–371; sequence AKKDDKKSATD. The segment covering 378–387 has biased composition (low complexity); the sequence is DASTSSKKKK.

It belongs to the XPG/RAD2 endonuclease family. FEN1 subfamily. As to quaternary structure, interacts with PCNA. Three molecules of FEN1 bind to one PCNA trimer with each molecule binding to one PCNA monomer. PCNA stimulates the nuclease activity without altering cleavage specificity. Mg(2+) is required as a cofactor. Post-translationally, phosphorylated. Phosphorylation upon DNA damage induces relocalization to the nuclear plasma.

It localises to the nucleus. The protein resides in the nucleolus. The protein localises to the nucleoplasm. It is found in the mitochondrion. Functionally, structure-specific nuclease with 5'-flap endonuclease and 5'-3' exonuclease activities involved in DNA replication and repair. During DNA replication, cleaves the 5'-overhanging flap structure that is generated by displacement synthesis when DNA polymerase encounters the 5'-end of a downstream Okazaki fragment. It enters the flap from the 5'-end and then tracks to cleave the flap base, leaving a nick for ligation. Also involved in the long patch base excision repair (LP-BER) pathway, by cleaving within the apurinic/apyrimidinic (AP) site-terminated flap. Acts as a genome stabilization factor that prevents flaps from equilibrating into structures that lead to duplications and deletions. Also possesses 5'-3' exonuclease activity on nicked or gapped double-stranded DNA, and exhibits RNase H activity. Also involved in replication and repair of rDNA and in repairing mitochondrial DNA. This is Flap endonuclease 1 from Naegleria gruberi (Amoeba).